A 118-amino-acid polypeptide reads, in one-letter code: Large ribosomal subunit protein uL18 (118 aa).

The protein belongs to the universal ribosomal protein uL18 family. Part of the 50S ribosomal subunit; part of the 5S rRNA/L5/L18/L25 subcomplex. Contacts the 5S and 23S rRNAs.

Its function is as follows. This is one of the proteins that bind and probably mediate the attachment of the 5S RNA into the large ribosomal subunit, where it forms part of the central protuberance. This chain is Large ribosomal subunit protein uL18, found in Campylobacter jejuni subsp. doylei (strain ATCC BAA-1458 / RM4099 / 269.97).